Consider the following 252-residue polypeptide: MTDRLKGKVAIVTGGTLGIGLAIADKFVEEGAKVVITGRHADVGEKAAKSIGGTDVIRFVQHDASDEAGWTKLFDTTEEAFGPVTTVVNNAGIAVSKSVEDTTTEEWRKLLSVNLDGVFFGTRLGIQRMKNKGLGASIINMSSIEGFVGDPTLGAYNASKGAVRIMSKSAALDCALKDYDVRVNTVHPGYIKTPLVDDLEGAEEMMSQRTKTPMGHIGEPNDIAWICVYLASDESKFATGAEFVVDGGYTAQ.

NADP(+)-binding positions include 16–19 (TLGI), 39–40 (RH), 63–64 (DA), N90, Y156, K160, and 191–195 (IKTPL). Catalysis depends on Y156, which acts as the Proton donor/acceptor. Mg(2+) is bound at residue Q252.

This sequence belongs to the short-chain dehydrogenases/reductases (SDR) family. As to quaternary structure, homotetramer. Mg(2+) serves as cofactor.

It carries out the reaction a secondary alcohol + NADP(+) = a ketone + NADPH + H(+). It catalyses the reaction acetophenone + NADPH + H(+) = (R)-1-phenylethanol + NADP(+). The catalysed reaction is 2,5-hexanedione + 2 NADPH + 2 H(+) = (2R,5R)-hexanediol + 2 NADP(+). The enzyme catalyses ethyl 3-oxobutanoate + NADPH + H(+) = ethyl (R)-3-hydroxybutanoate + NADP(+). It carries out the reaction 2-octanone + NADPH + H(+) = (2R)-octan-2-ol + NADP(+). Functionally, NADP-dependent (R)-specific alcohol dehydrogenase (ADH) with a broad substrate specificity, able to catalyze in vitro the stereoselective reduction of several aliphatic and aromatic ketones as well as beta-keto esters to the corresponding enantiomerically pure alcohols. The chain is NADP-dependent (R)-specific alcohol dehydrogenase from Lentilactobacillus kefiri (Lactobacillus kefiri).